We begin with the raw amino-acid sequence, 351 residues long: Transaldolase (351 aa).

The active-site Schiff-base intermediate with substrate is Lys138.

The protein belongs to the transaldolase family. Type 2 subfamily.

The protein localises to the cytoplasm. The enzyme catalyses D-sedoheptulose 7-phosphate + D-glyceraldehyde 3-phosphate = D-erythrose 4-phosphate + beta-D-fructose 6-phosphate. It participates in carbohydrate degradation; pentose phosphate pathway; D-glyceraldehyde 3-phosphate and beta-D-fructose 6-phosphate from D-ribose 5-phosphate and D-xylulose 5-phosphate (non-oxidative stage): step 2/3. Functionally, transaldolase is important for the balance of metabolites in the pentose-phosphate pathway. The sequence is that of Transaldolase from Neisseria gonorrhoeae (strain ATCC 700825 / FA 1090).